Here is a 119-residue protein sequence, read N- to C-terminus: DNA-binding protein TubR (119 aa).

Homodimer. Binds to TubZ filaments via the C-terminus of TubZ. DNA is not required for binding to TubZ.

In terms of biological role, a DNA-binding protein that is part of the type III plasmid partition system used to ensure correct segregation of the pBc10987 plasmid. Binds TubZ filaments but does not influence the GTPase activity of TubZ with or without DNA. Cooperatively binds to multiple regions in tubC (centromere-like site) upstream of its own gene with consensus sequence N(T/A)ATTNC(C/G)GNAAT(A/T)N; probably forms an extended DNA-protein filament. Binds sites in its own promoter region and presumably represses its expression; its effect on RNA expression has not been shown. Does not specifically bind to the putative origin of replication on pBc10987. The protein is DNA-binding protein TubR of Bacillus cereus (strain ATCC 10987 / NRS 248).